A 156-amino-acid chain; its full sequence is E3 ubiquitin-protein ligase RNF181 (156 aa).

The RING-type; atypical zinc finger occupies cysteine 79–arginine 120.

Belongs to the RNF181 family.

It catalyses the reaction S-ubiquitinyl-[E2 ubiquitin-conjugating enzyme]-L-cysteine + [acceptor protein]-L-lysine = [E2 ubiquitin-conjugating enzyme]-L-cysteine + N(6)-ubiquitinyl-[acceptor protein]-L-lysine.. The protein operates within protein modification; protein ubiquitination. In terms of biological role, E3 ubiquitin-protein ligase which accepts ubiquitin from an E2 ubiquitin-conjugating enzyme in the form of a thioester and then directly transfers the ubiquitin to targeted substrates. Catalyzes monoubiquitination of 26S proteasome subunit PSMC2/RPT1. This Xenopus laevis (African clawed frog) protein is E3 ubiquitin-protein ligase RNF181 (rnf181).